The following is a 175-amino-acid chain: Thioredoxin-like protein CITRX, chloroplastic (175 aa).

A chloroplast-targeting transit peptide spans 1-73 (MQAASLAFHP…REDYLVKKLS (73 aa)). Residues 74 to 175 (AKEIQELIKG…MMRDIINNDL (102 aa)) form the Thioredoxin domain. Catalysis depends on nucleophile residues Cys98 and Cys101. The cysteines at positions 98 and 101 are disulfide-linked.

It belongs to the thioredoxin family. Plant CITRX-type subfamily.

Its subcellular location is the plastid. It localises to the chloroplast. In terms of biological role, probable thiol-disulfide oxidoreductase that may play a role in proper chloroplast development. The protein is Thioredoxin-like protein CITRX, chloroplastic of Solanum tuberosum (Potato).